The chain runs to 935 residues: Auxin response factor 6 (935 aa).

Positions 129 to 231 form a DNA-binding region, TF-B3; that stretch reads FCKTLTASDT…QLLLGIRRAN (103 aa). 2 disordered regions span residues 536 to 624 and 645 to 714; these read QAYL…PLHT and SAMT…SASD. Composition is skewed to low complexity over residues 546–565 and 573–582; these read QPQSQAQSQSNNHLSQQQQQ and SASSAAVVSA. Composition is skewed to polar residues over residues 583-624 and 661-689; these read MSQF…PLHT and SSFQHSGAGNNNTQSVLEQLGQSHTSNVP. In terms of domain architecture, PB1 spans 796-880; sequence NTFVKVYKSG…WCIKILSPQE (85 aa). Polar residues predominate over residues 896 to 909; it reads PSSNNVDKLPSNGN. Residues 896-917 are disordered; it reads PSSNNVDKLPSNGNCDDFGNRS.

It belongs to the ARF family. As to quaternary structure, homodimers and heterodimers. In terms of tissue distribution, expressed in the whole plant.

The protein localises to the nucleus. In terms of biological role, auxin response factors (ARFs) are transcriptional factors that bind specifically to the DNA sequence 5'-TGTCTC-3' found in the auxin-responsive promoter elements (AuxREs). Seems to act as transcriptional activator. Formation of heterodimers with Aux/IAA proteins may alter their ability to modulate early auxin response genes expression. Regulates both stamen and gynoecium maturation. Promotes jasmonic acid production. Partially redundant with ARF8. The chain is Auxin response factor 6 (ARF6) from Arabidopsis thaliana (Mouse-ear cress).